A 442-amino-acid polypeptide reads, in one-letter code: Glutamyl-tRNA reductase (442 aa).

Substrate-binding positions include 49–52, Ser109, 114–116, and Gln120; these read TCNR and EGQ. Catalysis depends on Cys50, which acts as the Nucleophile. 198-203 serves as a coordination point for NADP(+); it reads GAGRMA. The disordered stretch occupies residues 420–442; that stretch reads MAAAQRLFDLPGDDADRDRSDAK. The segment covering 433–442 has biased composition (basic and acidic residues); the sequence is DADRDRSDAK.

This sequence belongs to the glutamyl-tRNA reductase family. Homodimer.

The enzyme catalyses (S)-4-amino-5-oxopentanoate + tRNA(Glu) + NADP(+) = L-glutamyl-tRNA(Glu) + NADPH + H(+). The protein operates within porphyrin-containing compound metabolism; protoporphyrin-IX biosynthesis; 5-aminolevulinate from L-glutamyl-tRNA(Glu): step 1/2. It functions in the pathway porphyrin-containing compound metabolism; chlorophyll biosynthesis. Functionally, catalyzes the NADPH-dependent reduction of glutamyl-tRNA(Glu) to glutamate 1-semialdehyde (GSA). In Synechococcus sp. (strain RCC307), this protein is Glutamyl-tRNA reductase.